Here is a 280-residue protein sequence, read N- to C-terminus: Small ribosomal subunit protein uS3 (280 aa).

Residues 38–106 (IRKLLATGLE…QVQLNILEVK (69 aa)) enclose the KH type-2 domain. A disordered region spans residues 216-280 (AAAPAADRPR…SAGQPETTES (65 aa)). Over residues 237–270 (SGASGTTATSTDAGRAASEGTVEAPATEAAATAP) the composition is skewed to low complexity.

Belongs to the universal ribosomal protein uS3 family. In terms of assembly, part of the 30S ribosomal subunit. Forms a tight complex with proteins S10 and S14.

Its function is as follows. Binds the lower part of the 30S subunit head. Binds mRNA in the 70S ribosome, positioning it for translation. This Mycolicibacterium vanbaalenii (strain DSM 7251 / JCM 13017 / BCRC 16820 / KCTC 9966 / NRRL B-24157 / PYR-1) (Mycobacterium vanbaalenii) protein is Small ribosomal subunit protein uS3.